A 441-amino-acid polypeptide reads, in one-letter code: 5-hydroxytryptamine receptor 3B (441 aa).

Residues 1–21 form the signal peptide; the sequence is MLSSVMAPLWACILVAAGILA. The Extracellular portion of the chain corresponds to 22–238; that stretch reads TDTHHPQDSA…IQFNVVMRRH (217 aa). N52, N96, N138, N168, and N203 each carry an N-linked (GlcNAc...) asparagine glycan. A disulfide bridge links C155 with C169. A helical transmembrane segment spans residues 239–259; the sequence is PLVYVVSLLIPSIFLMLVDLG. Topologically, residues 260 to 268 are cytoplasmic; the sequence is SFYLPPNCR. A helical membrane pass occupies residues 269-286; it reads ARIVFKTSVLVGYTVFRV. The N-linked (GlcNAc...) asparagine glycan is linked to N287. Residues 287–303 lie on the Extracellular side of the membrane; that stretch reads NMSNQVPRSVGSTPLIG. The helical transmembrane segment at 304 to 324 threads the bilayer; it reads HFFTICMAFLVLSLAKSIVLV. The Cytoplasmic portion of the chain corresponds to 325 to 414; that stretch reads KFLHDEQRGG…WLVLLSRFDR (90 aa). An HA-stretch; determines single-channel conductance in 5-HT3 receptors region spans residues 381-413; the sequence is VWSQLQSISNYLQTQDQTDQQEAEWLVLLSRFD. The helical transmembrane segment at 415–435 threads the bilayer; that stretch reads LLFQSYLFMLGIYTITLCSLW. Residues 436–441 are Extracellular-facing; it reads ALWGGV.

It belongs to the ligand-gated ion channel (TC 1.A.9) family. 5-hydroxytryptamine receptor (TC 1.A.9.2) subfamily. HTR3B sub-subfamily. As to quaternary structure, forms homopentameric as well as heteropentameric serotonin-activated cation-selective channel complexes with HTR3A. The homomeric complex is not functional. Heteropentameric complexes display properties which resemble that of neuronal serotonin-activated channels in vivo. Post-translationally, N-glycosylation required for membrane localization. In terms of tissue distribution, expressed in the brain cortex, in the caudate nucleus, the hippocampus, the thalamus and the amygdala. Detected in the kidney and testis as well as in monocytes of the spleen, small and large intestine, uterus, prostate, ovary and placenta.

It is found in the postsynaptic cell membrane. Its subcellular location is the cell membrane. It carries out the reaction Na(+)(in) = Na(+)(out). The catalysed reaction is K(+)(in) = K(+)(out). It catalyses the reaction Ca(2+)(in) = Ca(2+)(out). In terms of biological role, forms serotonin (5-hydroxytryptamine/5-HT3)-activated cation-selective channel complexes, which when activated cause fast, depolarizing responses in neurons. This is 5-hydroxytryptamine receptor 3B from Homo sapiens (Human).